The primary structure comprises 300 residues: Tetrahydromethanopterin S-methyltransferase subunit E (300 aa).

A run of 6 helical transmembrane segments spans residues 62 to 82 (PVSY…LMGM), 86 to 106 (PILA…AYSV), 135 to 155 (PIVG…YLAV), 158 to 178 (LGNP…VGAI), 226 to 246 (YFCS…IIFL), and 261 to 281 (LITK…TTLL).

It belongs to the MtrE family. The complex is composed of 8 subunits; MtrA, MtrB, MtrC, MtrD, MtrE, MtrF, MtrG and MtrH.

Its subcellular location is the cell membrane. The enzyme catalyses 5-methyl-5,6,7,8-tetrahydromethanopterin + coenzyme M + 2 Na(+)(in) = 5,6,7,8-tetrahydromethanopterin + methyl-coenzyme M + 2 Na(+)(out). The protein operates within one-carbon metabolism; methanogenesis from CO(2); methyl-coenzyme M from 5,10-methylene-5,6,7,8-tetrahydromethanopterin: step 2/2. Functionally, part of a complex that catalyzes the formation of methyl-coenzyme M and tetrahydromethanopterin from coenzyme M and methyl-tetrahydromethanopterin. This is an energy-conserving, sodium-ion translocating step. This is Tetrahydromethanopterin S-methyltransferase subunit E from Methanococcus aeolicus (strain ATCC BAA-1280 / DSM 17508 / OCM 812 / Nankai-3).